A 166-amino-acid chain; its full sequence is 3-isopropylmalate dehydratase small subunit 2 (166 aa).

It belongs to the LeuD family. LeuD type 2 subfamily. As to quaternary structure, heterodimer of LeuC and LeuD.

The catalysed reaction is (2R,3S)-3-isopropylmalate = (2S)-2-isopropylmalate. It functions in the pathway amino-acid biosynthesis; L-leucine biosynthesis; L-leucine from 3-methyl-2-oxobutanoate: step 2/4. Its function is as follows. Catalyzes the isomerization between 2-isopropylmalate and 3-isopropylmalate, via the formation of 2-isopropylmaleate. This is 3-isopropylmalate dehydratase small subunit 2 (leuD2) from Thermotoga maritima (strain ATCC 43589 / DSM 3109 / JCM 10099 / NBRC 100826 / MSB8).